Here is a 423-residue protein sequence, read N- to C-terminus: Glycine amidinotransferase, mitochondrial (423 aa).

The N-terminal 43 residues, 1–43 (MLRVRCLRGGSRGAEAVHYIGSRLGRTLTGWVQRTFQSTQAAT), are a transit peptide targeting the mitochondrion. A disordered region spans residues 43–63 (TASSRNSFAADDKATEPLPKD). Ser-46 and Ser-49 each carry phosphoserine. Over residues 52–61 (ADDKATEPLP) the composition is skewed to basic and acidic residues. Residue Asp-170 participates in arginine binding. Active-site residues include Asp-254 and His-303. Arginine-binding residues include Asp-305, Arg-322, Ser-354, and Ser-355. Residue Lys-385 is modified to N6-acetyllysine. The active-site Amidino-cysteine intermediate is Cys-407.

Belongs to the amidinotransferase family. As to quaternary structure, homodimer.

The protein resides in the mitochondrion inner membrane. It carries out the reaction L-arginine + glycine = guanidinoacetate + L-ornithine. The enzyme catalyses 4-aminobutanoate + L-arginine = 4-guanidinobutanoate + L-ornithine. It catalyses the reaction beta-alanine + L-arginine = 3-guanidinopropanoate + L-ornithine. The catalysed reaction is taurine + L-arginine = taurocyamine + L-ornithine. The protein operates within amine and polyamine biosynthesis; creatine biosynthesis; creatine from L-arginine and glycine: step 1/2. In terms of biological role, transamidinase that catalyzes the transfer of the amidino group of L-arginine onto the amino moiety of acceptor metabolites such as glycine, beta-alanine, gamma-aminobutyric acid (GABA) and taurine yielding the corresponding guanidine derivatives. Catalyzes the rate-limiting step of creatine biosynthesis, namely the transfer of the amidino group from L-arginine to glycine to generate guanidinoacetate, which is then methylated by GAMT to form creatine. Provides creatine as a source for ATP generation in tissues with high energy demands, in particular skeletal muscle, heart and brain. The polypeptide is Glycine amidinotransferase, mitochondrial (GATM) (Macaca fascicularis (Crab-eating macaque)).